A 389-amino-acid chain; its full sequence is MARDRREGLEIKVVNPPAAATNNVAVETSPATATRRRRQQQRASFAEFRPFKLWFPWLVPAIVVANIALFAISMFINNCPKNSAYCLARFLGRFAFQPMKENPLLGPSSLTLEKMGALDVSMVVHKHEVWRLFTCIWLHAGVFHVLANMLSLIFIGIRLEQEFGFVRIGLLYMISGFGGSLLSSLFNRAGISVGASGALFGLLGAMLSELLTNWTIYANKFAALLTLIFIIAINLAVGILPHVDNFAHLGGFTSGFLLGFVFLIRPQYGYFNQRNNPRGYAAPSAKSKHKPYQYVLWITSLVLLIAGYTAGLVVLLRGTDLNKHCSWCHYLSCIPTSLWSCKSQNVYCESSQIGQQMNLTCITNGKTEMYKLSNDIPSRIQQLCSQLCR.

The next 7 membrane-spanning stretches (helical) occupy residues 56-76, 136-156, 163-183, 191-211, 221-241, 244-264, and 295-315; these read PWLV…SMFI, IWLH…IFIG, FGFV…SLLS, ISVG…SELL, FAAL…GILP, DNFA…VFLI, and VLWI…LVVL. The active-site Nucleophile is the Ser-196. The Charge relay system role is filled by His-248.

The protein belongs to the peptidase S54 family. Expressed in roots, seedlings, leaves, stems and flowers.

The protein localises to the golgi apparatus membrane. The enzyme catalyses Cleaves type-1 transmembrane domains using a catalytic dyad composed of serine and histidine that are contributed by different transmembrane domains.. Probable rhomboid-type serine protease that catalyzes intramembrane proteolysis. Unable to cleave the Drosophila protein Spitz. The chain is RHOMBOID-like protein 1 from Arabidopsis thaliana (Mouse-ear cress).